The primary structure comprises 146 residues: Fluoride-specific ion channel FluC (146 aa).

Transmembrane regions (helical) follow at residues 8-28 (FAIA…TLTV), 47-67 (LANL…QALV), 91-111 (IGVL…AVFA), and 121-141 (MLLG…AAVV). Positions 95 and 98 each coordinate Na(+).

The protein belongs to the fluoride channel Fluc/FEX (TC 1.A.43) family.

Its subcellular location is the cell inner membrane. It catalyses the reaction fluoride(in) = fluoride(out). With respect to regulation, na(+) is not transported, but it plays an essential structural role and its presence is essential for fluoride channel function. Fluoride-specific ion channel. Important for reducing fluoride concentration in the cell, thus reducing its toxicity. This chain is Fluoride-specific ion channel FluC, found in Rhodopirellula baltica (strain DSM 10527 / NCIMB 13988 / SH1).